The chain runs to 266 residues: 4-hydroxy-tetrahydrodipicolinate reductase (266 aa).

11-16 (GALGKM) contacts NAD(+). NADP(+) is bound at residue K39. 100-102 (GTT) lines the NAD(+) pocket. The active-site Proton donor/acceptor is H156. Position 157 (H157) interacts with (S)-2,3,4,5-tetrahydrodipicolinate. K160 serves as the catalytic Proton donor. A (S)-2,3,4,5-tetrahydrodipicolinate-binding site is contributed by 166–167 (GT).

Belongs to the DapB family.

It localises to the cytoplasm. The enzyme catalyses (S)-2,3,4,5-tetrahydrodipicolinate + NAD(+) + H2O = (2S,4S)-4-hydroxy-2,3,4,5-tetrahydrodipicolinate + NADH + H(+). It carries out the reaction (S)-2,3,4,5-tetrahydrodipicolinate + NADP(+) + H2O = (2S,4S)-4-hydroxy-2,3,4,5-tetrahydrodipicolinate + NADPH + H(+). Its pathway is amino-acid biosynthesis; L-lysine biosynthesis via DAP pathway; (S)-tetrahydrodipicolinate from L-aspartate: step 4/4. Its function is as follows. Catalyzes the conversion of 4-hydroxy-tetrahydrodipicolinate (HTPA) to tetrahydrodipicolinate. The polypeptide is 4-hydroxy-tetrahydrodipicolinate reductase (Syntrophomonas wolfei subsp. wolfei (strain DSM 2245B / Goettingen)).